Reading from the N-terminus, the 346-residue chain is N-acetyl-gamma-glutamyl-phosphate reductase (346 aa).

Residue Cys150 is part of the active site.

Belongs to the NAGSA dehydrogenase family. Type 1 subfamily.

It localises to the cytoplasm. The enzyme catalyses N-acetyl-L-glutamate 5-semialdehyde + phosphate + NADP(+) = N-acetyl-L-glutamyl 5-phosphate + NADPH + H(+). The protein operates within amino-acid biosynthesis; L-arginine biosynthesis; N(2)-acetyl-L-ornithine from L-glutamate: step 3/4. Catalyzes the NADPH-dependent reduction of N-acetyl-5-glutamyl phosphate to yield N-acetyl-L-glutamate 5-semialdehyde. This is N-acetyl-gamma-glutamyl-phosphate reductase from Brevibacillus brevis (strain 47 / JCM 6285 / NBRC 100599).